The chain runs to 79 residues: Defensin-like protein 54 (79 aa).

The N-terminal stretch at 1 to 27 is a signal peptide; that stretch reads MGIKKTSATVFLVIILTISFSYYDVEA. Disulfide bonds link Cys39–Cys76, Cys43–Cys67, Cys52–Cys74, and Cys56–Cys75.

This sequence belongs to the DEFL family.

It localises to the secreted. This is Defensin-like protein 54 from Arabidopsis thaliana (Mouse-ear cress).